The following is a 299-amino-acid chain: GDNF family receptor alpha-4 (299 aa).

An N-terminal signal peptide occupies residues 1–20; it reads MVRCLGPALLLLLLLGSASS. The tract at residues 145–198 is disordered; the sequence is RGLSPAHRPPAAQASPPGLSGLVHPSAQRPRRLPAGPGRPLPARLRGPRGVPAG. Residues 177 to 198 are compositionally biased toward low complexity; that stretch reads LPAGPGRPLPARLRGPRGVPAG. Residue N208 is glycosylated (N-linked (GlcNAc...) asparagine). G278 carries GPI-anchor amidated glycine lipidation. Positions 279 to 299 are cleaved as a propeptide — removed in mature form; the sequence is RALERRSLLSILPVLALPALL.

It belongs to the GDNFR family. As to quaternary structure, interacts with ARTN ligand and RET: forms a 2:2:2 ternary complex composed of ARTN ligand, GFRA3 and RET receptor. Interacts with SORL1. As to expression, predominantly expressed in the adult thyroid gland. Low levels also found in fetal adrenal and thyroid glands.

It localises to the cell membrane. The protein resides in the secreted. Functionally, receptor for persephin (PSPN), a growth factor that exhibits neurotrophic activity on mesencephalic dopaminergic and motor neurons. Acts by binding to its coreceptor, GFRA4, leading to autophosphorylation and activation of the RET receptor. May be important in C-cell development and, in the postnatal development of the adrenal medulla. The protein is GDNF family receptor alpha-4 (GFRA4) of Homo sapiens (Human).